Here is a 276-residue protein sequence, read N- to C-terminus: Tryptase beta-2 (276 aa).

The N-terminal stretch at 1–21 (MLKRRLLLLWALSLLASLVYS) is a signal peptide. The propeptide at 22-31 (APRPANQRVG) is activation peptide. In terms of domain architecture, Peptidase S1 spans 32–273 (IVGGHEASES…YLDWIHRYVP (242 aa)). Cys-60 and Cys-76 are disulfide-bonded. The active-site Charge relay system is the His-75. A Phosphotyrosine modification is found at Tyr-98. Asp-122 serves as the catalytic Charge relay system. A glycan (N-linked (GlcNAc...) asparagine) is linked at Asn-133. 3 disulfides stabilise this stretch: Cys-156–Cys-231, Cys-189–Cys-212, and Cys-221–Cys-249. The active-site Charge relay system is the Ser-225.

It belongs to the peptidase S1 family. Tryptase subfamily. In terms of assembly, homotetramer. The active tetramer is converted to inactive monomers at neutral and acidic pH in the absence of heparin. Low concentrations of inactive monomers become active monomers at pH 6.0 in the presence of heparin. When the concentration of active monomers is higher, they convert to active monomers and then to active tetramers. These monomers are active and functionally distinct from the tetrameric enzyme. In contrast to the hidden active sites in the tetrameric form, the active site of the monomeric form is accessible for macromolecular proteins and inhibitors, e.g. fibrinogen which is a substrate for the monomeric but not for the tetrameric form. The monomeric form forms a complex with SERPINB6. During embryogenesis, detected primarily in skin.

It localises to the secreted. It catalyses the reaction Preferential cleavage: Arg-|-Xaa, Lys-|-Xaa, but with more restricted specificity than trypsin.. Functionally, tryptase is the major neutral protease present in mast cells and is secreted upon the coupled activation-degranulation response of this cell type. Plays a role in innate immunity. The polypeptide is Tryptase beta-2 (Tpsb2) (Mus musculus (Mouse)).